The primary structure comprises 369 residues: MCPLWLLAALLALSQALPFEQKAFWDFTLDDGLPMLNDEEASGAETTSGIPDLDSLPPTYSAMCPFGCHCHLRVVQCSDLGLKAVPKEISPDTTLLDLQNNDISELRKDDFKGLQHLYALVLVNNKISKIHEKAFSPLRKLQKLYISKNHLVEIPPNLPSSLVELRIHDNRIRKVPKGVFSGLRNMNCIEMGGNPLENSGFEPGAFDGLKLNYLRISEAKLTGIPKDLPETLNELHLDHNKIQAIELEDLLRYSKLYRLGLGHNQIRMIENGSLSFLPTLRELHLDNNKLSRVPAGLPDLKLLQVVYLHTNNITKVGVNDFCPVGFGVKRAYYNGISLFNNPVPYWEVQPATFRCVTDRLAIQFGNYKK.

The signal sequence occupies residues 1-16 (MCPLWLLAALLALSQA). A propeptide spanning residues 17 to 37 (LPFEQKAFWDFTLDDGLPMLN) is cleaved from the precursor. Serine 42 and serine 48 each carry an O-linked (Xyl...) (glycosaminoglycan) serine glycan. 2 cysteine pairs are disulfide-bonded: cysteine 64–cysteine 70 and cysteine 68–cysteine 77. LRR repeat units lie at residues 83–103 (KAVPKEISPDTTLLDLQNNDI), 104–127 (SELRKDDFKGLQHLYALVLVNNKI), 128–151 (SKIHEKAFSPLRKLQKLYISKNHL), 152–172 (VEIPPNLPSSLVELRIHDNRI), 173–196 (RKVPKGVFSGLRNMNCIEMGGNPL), 197–221 (ENSGFEPGAFDGLKLNYLRISEAKL), 222–242 (TGIPKDLPETLNELHLDHNKI), 243–266 (QAIELEDLLRYSKLYRLGLGHNQI), 267–290 (RMIENGSLSFLPTLRELHLDNNKL), 291–313 (SRVPAGLPDLKLLQVVYLHTNNI), 314–343 (TKVGVNDFCPVGFGVKRAYYNGISLFNNPV), and 344–369 (PYWEVQPATFRCVTDRLAIQFGNYKK). N-linked (GlcNAc...) asparagine glycosylation is found at asparagine 271 and asparagine 312. Residues cysteine 322 and cysteine 355 are joined by a disulfide bond.

Belongs to the small leucine-rich proteoglycan (SLRP) family. SLRP class I subfamily. Homodimer. Forms a ternary complex with MFAP2 and ELN. Post-translationally, the two attached glycosaminoglycan chains can be either chondroitin sulfate or dermatan sulfate. Found in several connective tissues, especially in articular cartilages.

It is found in the secreted. Its subcellular location is the extracellular space. The protein resides in the extracellular matrix. In terms of biological role, may be involved in collagen fiber assembly. In Ovis aries (Sheep), this protein is Biglycan (BGN).